The chain runs to 450 residues: Hyaluronidase-1 (450 aa).

The first 35 residues, 1–35, serve as a signal peptide directing secretion; it reads MRPFSLEVSLHLPWAMAAHLLPVCTLFLNLLSMTQ. 2 disulfide bridges follow: cysteine 58/cysteine 348 and cysteine 222/cysteine 236. N-linked (GlcNAc...) asparagine glycosylation is present at asparagine 85. The Proton donor role is filled by glutamate 146. Residues asparagine 231 and asparagine 365 are each glycosylated (N-linked (GlcNAc...) asparagine). Cystine bridges form between cysteine 373–cysteine 384, cysteine 378–cysteine 433, and cysteine 435–cysteine 444. An N-linked (GlcNAc...) asparagine glycan is attached at asparagine 398. One can recognise an EGF-like domain in the interval 433-444; it reads CRCYRGWRGTRC.

It belongs to the glycosyl hydrolase 56 family.

It is found in the secreted. It localises to the lysosome. The enzyme catalyses Random hydrolysis of (1-&gt;4)-linkages between N-acetyl-beta-D-glucosamine and D-glucuronate residues in hyaluronate.. In terms of biological role, may have a role in promoting tumor progression. May block the TGFB1-enhanced cell growth. The sequence is that of Hyaluronidase-1 (HYAL1) from Bos taurus (Bovine).